The sequence spans 254 residues: Sulfoacetaldehyde reductase (254 aa).

8–32 (FITGATSGFGEAAAQVFADAGWSLV) contributes to the NADP(+) binding site. S141 lines the substrate pocket. The active-site Proton acceptor is Y154.

Belongs to the short-chain dehydrogenases/reductases (SDR) family. Homodimer and heterotetramer.

It catalyses the reaction 2-hydroxyethane-1-sulfonate + NADP(+) = sulfoacetaldehyde + NADPH + H(+). It participates in organosulfur degradation. Functionally, catalyzes the formation of isethionate from 2-sulfoacetaldehyde in the deaminative pathway of taurine. The enzyme is specific for NADPH; NADH is not a substrate. The protein is Sulfoacetaldehyde reductase (isfD) of Klebsiella oxytoca.